The sequence spans 993 residues: Glycine dehydrogenase (decarboxylating) (993 aa).

K715 carries the post-translational modification N6-(pyridoxal phosphate)lysine.

It belongs to the GcvP family. In terms of assembly, the glycine cleavage system is composed of four proteins: P, T, L and H. Pyridoxal 5'-phosphate serves as cofactor.

The enzyme catalyses N(6)-[(R)-lipoyl]-L-lysyl-[glycine-cleavage complex H protein] + glycine + H(+) = N(6)-[(R)-S(8)-aminomethyldihydrolipoyl]-L-lysyl-[glycine-cleavage complex H protein] + CO2. Its function is as follows. The glycine cleavage system catalyzes the degradation of glycine. The P protein binds the alpha-amino group of glycine through its pyridoxal phosphate cofactor; CO(2) is released and the remaining methylamine moiety is then transferred to the lipoamide cofactor of the H protein. The protein is Glycine dehydrogenase (decarboxylating) of Xylella fastidiosa (strain Temecula1 / ATCC 700964).